The following is a 436-amino-acid chain: MTEVKIKRLYTGDADFASQLDRLLAWSESEDTDIHQRVTEIIGCIRRDGDAALVELTARFDHFVVDTAAALELPRDVLEAAWQALPAEQAKALREAAERIRAYAERQKLDSWDYREADGTLLGQKITPLDRVGLYVPGGKAAYPSSVLMNAVPAKVAGVPELIMAVPAPRGELNALVLAAAYISGVDRVFRIGGAQAVAALAYGTETVPRVDKIVGPGNIYVATAKKLVFGQVGIDMVAGPSEILVISDGRTDPDWIAMDLFSQAEHDEDAQAILISPDAAHLEAVQASIERLLPGMERAEVIRTSLERRGGMILVDDLEQAAAVANRIAPEHLELSVESPEVLVESIRNAGAIFMGRYTAEALGDYCAGPNHVLPTSGTARFSSPLGVYDFQKRSSLIYCSPDGADQLGRTASLLAWGEGLGAHARSAEYRIRHH.

Residues Tyr135, Gln196, and Asn219 each coordinate NAD(+). Ser242, Gln264, and His267 together coordinate substrate. 2 residues coordinate Zn(2+): Gln264 and His267. Active-site proton acceptor residues include Glu332 and His333. Substrate contacts are provided by His333, Asp366, Glu420, and His425. Asp366 contacts Zn(2+). His425 is a binding site for Zn(2+).

The protein belongs to the histidinol dehydrogenase family. Requires Zn(2+) as cofactor.

The enzyme catalyses L-histidinol + 2 NAD(+) + H2O = L-histidine + 2 NADH + 3 H(+). It functions in the pathway amino-acid biosynthesis; L-histidine biosynthesis; L-histidine from 5-phospho-alpha-D-ribose 1-diphosphate: step 9/9. In terms of biological role, catalyzes the sequential NAD-dependent oxidations of L-histidinol to L-histidinaldehyde and then to L-histidine. The polypeptide is Histidinol dehydrogenase (Methylococcus capsulatus (strain ATCC 33009 / NCIMB 11132 / Bath)).